The chain runs to 303 residues: GTPase Era (303 aa).

Residues 8–176 (YCGFIAIVGR…ASIVRKHMPE (169 aa)) enclose the Era-type G domain. The tract at residues 16–23 (GRPNVGKS) is G1. 16 to 23 (GRPNVGKS) contributes to the GTP binding site. Residues 42-46 (QTTRH) are G2. The segment at 63-66 (DTPG) is G3. GTP-binding positions include 63–67 (DTPGL) and 125–128 (NKVD). Residues 125–128 (NKVD) form a G4 region. A G5 region spans residues 155 to 157 (ISA). The 78-residue stretch at 207–284 (LGEELPYSVT…HLELWVKVKS (78 aa)) folds into the KH type-2 domain.

This sequence belongs to the TRAFAC class TrmE-Era-EngA-EngB-Septin-like GTPase superfamily. Era GTPase family. As to quaternary structure, monomer.

It is found in the cytoplasm. The protein localises to the cell inner membrane. Its function is as follows. An essential GTPase that binds both GDP and GTP, with rapid nucleotide exchange. Plays a role in 16S rRNA processing and 30S ribosomal subunit biogenesis and possibly also in cell cycle regulation and energy metabolism. In Yersinia enterocolitica serotype O:8 / biotype 1B (strain NCTC 13174 / 8081), this protein is GTPase Era.